We begin with the raw amino-acid sequence, 2039 residues long: Calcium-channel protein CCH1 (2039 aa).

Disordered regions lie at residues 1–171 and 206–288; these read MQGR…PPRS and PQLK…PQKE. Residues 64–80 are compositionally biased toward basic and acidic residues; that stretch reads STEEKKGDEYNGNDKDS. A glycan (N-linked (GlcNAc...) asparagine) is linked at Asn98. Composition is skewed to low complexity over residues 122–132 and 147–164; these read SPSTKSAKSSS and FSSY…SPSS. Over residues 209–226 the composition is skewed to basic and acidic residues; the sequence is KSEKSRPVSDVGEDRGEG. Residues Asn257 and Asn269 are each glycosylated (N-linked (GlcNAc...) asparagine). Residues 271-281 show a composition bias toward basic residues; the sequence is SRKKPSPKFFH. Ser284 bears the Phosphoserine mark. A helical membrane pass occupies residues 346–366; sequence YSLLYNTLLTFYAILLAIRTY. Residue Asn379 is glycosylated (N-linked (GlcNAc...) asparagine). The helical transmembrane segment at 384 to 404 threads the bilayer; that stretch reads FIFILSACFTGNDIAKIIAFG. N-linked (GlcNAc...) asparagine glycosylation occurs at Asn559. The next 3 membrane-spanning stretches (helical) occupy residues 563–583, 658–678, and 691–711; these read MLVY…QGSF, IVNS…TDLM, and LFFI…LIAV. Residues Asn754 and Asn760 are each glycosylated (N-linked (GlcNAc...) asparagine). A run of 3 helical transmembrane segments spans residues 766-786, 809-829, and 841-861; these read LAIY…DIGM, ISIV…PNMW, and FIIS…VLGH. Asn882 and Asn900 each carry an N-linked (GlcNAc...) asparagine glycan. Helical transmembrane passes span 904–924 and 942–962; these read FYFF…EGVI and SFLS…LYAL. Asn968 is a glycosylation site (N-linked (GlcNAc...) asparagine). Residues 978–998 traverse the membrane as a helical segment; the sequence is FFIIWFLLSNSVILNIFIALI. A glycan (N-linked (GlcNAc...) asparagine) is linked at Asn1153. Residues 1207 to 1227 traverse the membrane as a helical segment; that stretch reads VFVFIFALATILLIVCSCYVT. An N-linked (GlcNAc...) asparagine glycan is attached at Asn1240. 2 helical membrane passes run 1247-1267 and 1277-1297; these read CAFI…DGFI and PWNF…IAYL. Asn1302 carries an N-linked (GlcNAc...) asparagine glycan. The next 2 membrane-spanning stretches (helical) occupy residues 1340 to 1360 and 1408 to 1428; these read IFEA…WGLS and FASA…VDLL. Asn1433 is a glycosylation site (N-linked (GlcNAc...) asparagine). The next 5 helical transmembrane spans lie at 1452–1472, 1529–1549, 1554–1574, 1596–1616, and 1618–1638; these read FLVL…VSFI, NFYY…MLLS, PGNL…VFLI, IRLS…HVPA, and HYWF…FIIP. N-linked (GlcNAc...) asparagine glycosylation occurs at Asn1640. Residues 1654-1674 form a helical membrane-spanning segment; the sequence is LPPILSLTYTWGVLFLVYAIA. 2 N-linked (GlcNAc...) asparagine glycosylation sites follow: Asn1687 and Asn1732. Residues 1748–1768 form a helical membrane-spanning segment; sequence LMSWNIISMYIFVNMFVSLII. 2 N-linked (GlcNAc...) asparagine glycosylation sites follow: Asn1770 and Asn1785. Positions 1787 to 1822 constitute an EF-hand domain; the sequence is SEIKKYIEAWSKFDTDGTGELELSYLPRIMHSFDGP. A disordered region spans residues 2011 to 2039; the sequence is PRMNQDSTMEPPEEPIDNNDDSANDLIDR. Positions 2021–2033 are enriched in acidic residues; it reads PPEEPIDNNDDSA.

It belongs to the calcium channel alpha-1 subunit (TC 1.A.1.11) family. Interacts with MID1 to form a Ca(2+) influx channel.

It is found in the cell membrane. Its function is as follows. Voltage-gated, high-affinity calcium channel that functions together with MID1 to mediate calcium entry into cells. Required during conditions of environmental stress. The sequence is that of Calcium-channel protein CCH1 (CCH1) from Saccharomyces cerevisiae (strain ATCC 204508 / S288c) (Baker's yeast).